The primary structure comprises 310 residues: Methionyl-tRNA formyltransferase (310 aa).

Position 110-113 (110-113 (SLLP)) interacts with (6S)-5,6,7,8-tetrahydrofolate.

It belongs to the Fmt family.

The enzyme catalyses L-methionyl-tRNA(fMet) + (6R)-10-formyltetrahydrofolate = N-formyl-L-methionyl-tRNA(fMet) + (6S)-5,6,7,8-tetrahydrofolate + H(+). Its function is as follows. Attaches a formyl group to the free amino group of methionyl-tRNA(fMet). The formyl group appears to play a dual role in the initiator identity of N-formylmethionyl-tRNA by promoting its recognition by IF2 and preventing the misappropriation of this tRNA by the elongation apparatus. The polypeptide is Methionyl-tRNA formyltransferase (Halorhodospira halophila (strain DSM 244 / SL1) (Ectothiorhodospira halophila (strain DSM 244 / SL1))).